The chain runs to 227 residues: Phosphoribosylformylglycinamidine synthase subunit PurQ (227 aa).

Residues 3–225 (FAVIVLPGSN…VKNWRETHVA (223 aa)) form the Glutamine amidotransferase type-1 domain. Cys86 (nucleophile) is an active-site residue. Residues His194 and Glu196 contribute to the active site.

Part of the FGAM synthase complex composed of 1 PurL, 1 PurQ and 2 PurS subunits.

The protein resides in the cytoplasm. The enzyme catalyses N(2)-formyl-N(1)-(5-phospho-beta-D-ribosyl)glycinamide + L-glutamine + ATP + H2O = 2-formamido-N(1)-(5-O-phospho-beta-D-ribosyl)acetamidine + L-glutamate + ADP + phosphate + H(+). The catalysed reaction is L-glutamine + H2O = L-glutamate + NH4(+). Its pathway is purine metabolism; IMP biosynthesis via de novo pathway; 5-amino-1-(5-phospho-D-ribosyl)imidazole from N(2)-formyl-N(1)-(5-phospho-D-ribosyl)glycinamide: step 1/2. Functionally, part of the phosphoribosylformylglycinamidine synthase complex involved in the purines biosynthetic pathway. Catalyzes the ATP-dependent conversion of formylglycinamide ribonucleotide (FGAR) and glutamine to yield formylglycinamidine ribonucleotide (FGAM) and glutamate. The FGAM synthase complex is composed of three subunits. PurQ produces an ammonia molecule by converting glutamine to glutamate. PurL transfers the ammonia molecule to FGAR to form FGAM in an ATP-dependent manner. PurS interacts with PurQ and PurL and is thought to assist in the transfer of the ammonia molecule from PurQ to PurL. This is Phosphoribosylformylglycinamidine synthase subunit PurQ from Bacillus licheniformis (strain ATCC 14580 / DSM 13 / JCM 2505 / CCUG 7422 / NBRC 12200 / NCIMB 9375 / NCTC 10341 / NRRL NRS-1264 / Gibson 46).